We begin with the raw amino-acid sequence, 500 residues long: Raftlin-2 (500 aa).

Gly-2 carries the N-myristoyl glycine lipid modification. The S-palmitoyl cysteine moiety is linked to residue Cys-3. The tract at residues 203-236 is disordered; it reads GHLSESGVEEEPQHESGQHQTERNSSPSYANPKR. The span at 213 to 224 shows a compositional bias: basic and acidic residues; the sequence is EPQHESGQHQTE. Position 404 is a phosphoserine (Ser-404). Residues 406–500 are disordered; sequence AQTPERKGSR…EEGVTQVTCM (95 aa). Phosphothreonine is present on Thr-408. Residues 409–424 are compositionally biased toward basic and acidic residues; that stretch reads PERKGSRLLKGEDRNK. Polar residues predominate over residues 426 to 438; it reads SSRSLGLDTNASQ. At Ser-429 the chain carries Phosphoserine. The span at 467–478 shows a compositional bias: low complexity; the sequence is SDSFSGFSSSDS.

This sequence belongs to the raftlin family. In terms of tissue distribution, expressed in B-cells, heart, brain, spleen, large intestine and lung. Expressed in dendritic cells and macrophages.

Its subcellular location is the cell membrane. In terms of biological role, upon bacterial lipopolysaccharide stimulation, mediates clathrin-dependent internalization of TLR4 in dendritic cells, resulting in activation of TICAM1-mediated signaling and subsequent IFNB1 production. May regulate B-cell antigen receptor-mediated signaling. This Mus musculus (Mouse) protein is Raftlin-2 (Rftn2).